Consider the following 502-residue polypeptide: Glutamate decarboxylase (502 aa).

At lysine 278 the chain carries N6-(pyridoxal phosphate)lysine. Residues 471-502 (GLHHFHMDTVETQKDIIKHWRKIAGKKTSGVC) form a calmodulin-binding region.

The protein belongs to the group II decarboxylase family. The cofactor is pyridoxal 5'-phosphate.

It catalyses the reaction L-glutamate + H(+) = 4-aminobutanoate + CO2. Its function is as follows. Catalyzes the production of GABA. The calmodulin-binding is calcium-dependent and it is proposed that this may, directly or indirectly, form a calcium regulated control of GABA biosynthesis. This Solanum lycopersicum (Tomato) protein is Glutamate decarboxylase.